Reading from the N-terminus, the 446-residue chain is WD repeat domain phosphoinositide-interacting protein 1 (446 aa).

WD repeat units lie at residues 3-42 (AEAADAPPGGVESALSCFSFNQDCTSLATGTKAGYKLFSL), 47-88 (QLDQ…VYHF), 92-126 (TEICNYSYSSNILSIRLNRQRLLVCLEESIYIHNI), 131-173 (LLKT…LYDG), 177-216 (KTVCTIAAHEGTLAAITFNASGSKLASASEKGTVIRVFSV), 222-261 (LYEFRRGMKRYVTISSLVFSMDSQFLCASSNTETVHIFKL), and 304-343 (FATARLNFSGQRNICTLSTIQKLPRLLVASSSGHLYMYNL). Positions 131 to 136 (LLKTLL) match the Nuclear receptor interaction motif. The L/FRRG motif signature appears at 225–228 (FRRG). Residues 386–406 (ARPSASSASTVPGYSEDGGAL) form a disordered region.

This sequence belongs to the WD repeat PROPPIN family. In terms of assembly, interacts with androgen receptor (AR) and the estrogen receptors ESR1 and ESR2. Interacts with WIPI2. Interacts with WDR45. Interacts with ATG16L1. May interact with NUDC. As to expression, ubiquitously expressed. Highly expressed in skeletal muscle, heart, testis, pancreas and placenta. Highly expressed in G361, Sk-mel-28, Sk-mel-13, WM852 and WM451 cells. Up-regulated in a variety of tumor tissues.

The protein localises to the golgi apparatus. It is found in the trans-Golgi network. Its subcellular location is the endosome. It localises to the cytoplasmic vesicle. The protein resides in the clathrin-coated vesicle. The protein localises to the preautophagosomal structure membrane. It is found in the cytoplasm. Its subcellular location is the cytoskeleton. Functionally, component of the autophagy machinery that controls the major intracellular degradation process by which cytoplasmic materials are packaged into autophagosomes and delivered to lysosomes for degradation. Plays an important role in starvation- and calcium-mediated autophagy, as well as in mitophagy. Functions downstream of the ULK1 and PI3-kinases that produce phosphatidylinositol 3-phosphate (PtdIns3P) on membranes of the endoplasmic reticulum once activated. Binds phosphatidylinositol 3-phosphate (PtdIns3P), and maybe other phosphoinositides including PtdIns3,5P2 and PtdIns5P, and is recruited to phagophore assembly sites at the endoplasmic reticulum membranes. There, it assists WIPI2 in the recruitment of ATG12-ATG5-ATG16L1, a complex that directly controls the elongation of the nascent autophagosomal membrane. Together with WDR45/WIPI4, promotes ATG2 (ATG2A or ATG2B)-mediated lipid transfer by enhancing ATG2-association with phosphatidylinositol 3-monophosphate (PI3P)-containing membranes. Involved in xenophagy of Staphylococcus aureus. Invading S.aureus cells become entrapped in autophagosome-like WIPI1 positive vesicles targeted for lysosomal degradation. Also plays a distinct role in controlling the transcription of melanogenic enzymes and melanosome maturation, a process that is distinct from starvation-induced autophagy. May also regulate the trafficking of proteins involved in the mannose-6-phosphate receptor (MPR) recycling pathway. The protein is WD repeat domain phosphoinositide-interacting protein 1 (WIPI1) of Homo sapiens (Human).